Reading from the N-terminus, the 234-residue chain is Probable pectate lyase F (234 aa).

A signal peptide spans 1 to 17; the sequence is MFSRIALLPAFLPVALA. Residues asparagine 168 and asparagine 194 are each glycosylated (N-linked (GlcNAc...) asparagine).

Belongs to the polysaccharide lyase 3 family. It depends on Ca(2+) as a cofactor.

The protein localises to the secreted. The catalysed reaction is Eliminative cleavage of (1-&gt;4)-alpha-D-galacturonan to give oligosaccharides with 4-deoxy-alpha-D-galact-4-enuronosyl groups at their non-reducing ends.. Its function is as follows. Pectinolytic enzyme consist of four classes of enzymes: pectin lyase, polygalacturonase, pectin methylesterase and rhamnogalacturonase. Among pectinolytic enzymes, pectin lyase is the most important in depolymerization of pectin, since it cleaves internal glycosidic bonds of highly methylated pectins. Favors pectate, the anion, over pectin, the methyl ester. This Aspergillus flavus (strain ATCC 200026 / FGSC A1120 / IAM 13836 / NRRL 3357 / JCM 12722 / SRRC 167) protein is Probable pectate lyase F (plyF).